Here is a 644-residue protein sequence, read N- to C-terminus: Exoribonuclease 2 (644 aa).

An RNB domain is found at 189–516 (REDLTALNFV…NHRLLKAMIT (328 aa)). The S1 motif domain maps to 561–643 (DTRFTAEIID…ETRNVIARPV (83 aa)).

The protein belongs to the RNR ribonuclease family. RNase II subfamily.

It is found in the cytoplasm. The enzyme catalyses Exonucleolytic cleavage in the 3'- to 5'-direction to yield nucleoside 5'-phosphates.. In terms of biological role, involved in mRNA degradation. Hydrolyzes single-stranded polyribonucleotides processively in the 3' to 5' direction. The sequence is that of Exoribonuclease 2 from Yersinia pestis bv. Antiqua (strain Antiqua).